The sequence spans 483 residues: MSGGGPSGGGPGGSGRARTSSFAEPGGGGGGGGGGPGGSASGPGGTGGGKASVGAMGGGVGASSSGGGPSGSGGGGSGGPGAGTSFPPPGVKLGRDSGKVTTVVATLGQGPERSQEVAYTDIKVIGNGSFGVVYQARLAETRELVAIKKVLQDKRFKNRELQIMRKLDHCNIVRLRYFFYSSGEKKDELYLNLVLEYVPETVYRVARHFTKAKLIIPIIYVKVYMYQLFRSLAYIHSQGVCHRDIKPQNLLVDPDTAVLKLCDFGSAKQLVRGEPNVSYICSRYYRAPELIFGATDYTSSIDVWSAGCVLAELLLGQPIFPGDSGVDQLVEIIKVLGTPTREQIREMNPNYTEFKFPQIKAHPWTKVFKSRTPPEAIALCSSLLEYTPSSRLSPLEACAHSFFDELRSLGTQLPNNRPLPPLFNFSPGELSIQPSLNAILIPPHLRSPSGPATLTSSSQALTETQTGQDWQAPDATPTLTNSS.

A compositionally biased stretch (gly residues) spans 1-15; sequence MSGGGPSGGGPGGSG. The segment at 1-96 is disordered; sequence MSGGGPSGGG…PPPGVKLGRD (96 aa). Serine 2 is modified (N-acetylserine). Serine 2 bears the Phosphoserine mark. Serine 21 carries the post-translational modification Phosphoserine; by PKB/AKT1. Over residues 25 to 82 the composition is skewed to gly residues; sequence PGGGGGGGGGGPGGSASGPGGTGGGKASVGAMGGGVGASSSGGGPSGSGGGGSGGPGA. Residues serine 72, serine 77, and serine 97 each carry the phosphoserine modification. A Protein kinase domain is found at 119-403; that stretch reads YTDIKVIGNG…PLEACAHSFF (285 aa). Residues 125–133 and lysine 148 each bind ATP; that span reads IGNGSFGVV. Aspartate 244 acts as the Proton acceptor in catalysis. Tyrosine 279 carries the post-translational modification Phosphotyrosine. Positions 443 to 483 are disordered; that stretch reads PHLRSPSGPATLTSSSQALTETQTGQDWQAPDATPTLTNSS. A compositionally biased stretch (polar residues) spans 450-469; the sequence is GPATLTSSSQALTETQTGQD.

Belongs to the protein kinase superfamily. CMGC Ser/Thr protein kinase family. GSK-3 subfamily. In terms of assembly, monomer. Interacts with ARRB2, AXIN1 and CTNNB1/beta-catenin. Interacts with CTNND2. Interacts with LMBR1L. Interacts with DDX3X. Interacts with TNFRSF10B. Post-translationally, phosphorylated by AKT1 at Ser-21: upon insulin-mediated signaling, the activated PKB/AKT1 protein kinase phosphorylates and deactivates GSK3A, resulting in the dephosphorylation and activation of GYS1. Activated by phosphorylation at Tyr-279.

The catalysed reaction is L-seryl-[tau protein] + ATP = O-phospho-L-seryl-[tau protein] + ADP + H(+). It catalyses the reaction L-threonyl-[tau protein] + ATP = O-phospho-L-threonyl-[tau protein] + ADP + H(+). The enzyme catalyses L-seryl-[protein] + ATP = O-phospho-L-seryl-[protein] + ADP + H(+). It carries out the reaction L-threonyl-[protein] + ATP = O-phospho-L-threonyl-[protein] + ADP + H(+). Activated by phosphorylation at Tyr-279. In response to insulin, inhibited by phosphorylation at Ser-21 by PKB/AKT1; phosphorylation at this site causes a conformational change, preventing access of substrates to the active site. Inhibited by lithium. Its function is as follows. Constitutively active protein kinase that acts as a negative regulator in the hormonal control of glucose homeostasis, Wnt signaling and regulation of transcription factors and microtubules, by phosphorylating and inactivating glycogen synthase (GYS1 or GYS2), CTNNB1/beta-catenin, APC and AXIN1. Requires primed phosphorylation of the majority of its substrates. Contributes to insulin regulation of glycogen synthesis by phosphorylating and inhibiting GYS1 activity and hence glycogen synthesis. Regulates glycogen metabolism in liver, but not in muscle. May also mediate the development of insulin resistance by regulating activation of transcription factors. In Wnt signaling, regulates the level and transcriptional activity of nuclear CTNNB1/beta-catenin. Facilitates amyloid precursor protein (APP) processing and the generation of APP-derived amyloid plaques found in Alzheimer disease. May be involved in the regulation of replication in pancreatic beta-cells. Is necessary for the establishment of neuronal polarity and axon outgrowth. Through phosphorylation of the anti-apoptotic protein MCL1, may control cell apoptosis in response to growth factors deprivation. Acts as a regulator of autophagy by mediating phosphorylation of KAT5/TIP60 under starvation conditions, activating KAT5/TIP60 acetyltransferase activity and promoting acetylation of key autophagy regulators, such as ULK1 and RUBCNL/Pacer. Negatively regulates extrinsic apoptotic signaling pathway via death domain receptors. Promotes the formation of an anti-apoptotic complex, made of DDX3X, BRIC2 and GSK3B, at death receptors, including TNFRSF10B. The anti-apoptotic function is most effective with weak apoptotic signals and can be overcome by stronger stimulation. This is Glycogen synthase kinase-3 alpha (Gsk3a) from Rattus norvegicus (Rat).